Here is a 983-residue protein sequence, read N- to C-terminus: Ephrin type-A receptor 3 (983 aa).

The first 20 residues, 1 to 20 (MDCQLSILLLLSCSVLDSFG), serve as a signal peptide directing secretion. Over 21 to 541 (ELIPQPSNEV…SFSISGESSQ (521 aa)) the chain is Extracellular. One can recognise an Eph LBD domain in the interval 29-207 (EVNLLDSKTI…YFKKCPFTVK (179 aa)). N-linked (GlcNAc...) asparagine glycans are attached at residues N232, N337, N391, N404, and N493. 2 Fibronectin type-III domains span residues 325–435 (PPSS…TNQA) and 436–531 (APSP…TSPD). A helical membrane pass occupies residues 542-565 (VVMIAISAAVAIILLTVVIYVLIG). Residues 566-983 (RFCGYKSKHG…TQSKNGPVPV (418 aa)) lie on the Cytoplasmic side of the membrane. Y596 and Y602 each carry phosphotyrosine; by autocatalysis. The Protein kinase domain occupies 621–882 (ISIDKVVGAG…QIVSILDKLI (262 aa)). ATP contacts are provided by residues 628 to 633 (GAGEFG), K653, and 700 to 706 (EYMENGS). Y701 is subject to Phosphotyrosine; by autocatalysis. D746 acts as the Proton acceptor in catalysis. 750–751 (RN) serves as a coordination point for ATP. Y779 carries the phosphotyrosine; by autocatalysis modification. One can recognise an SAM domain in the interval 911-975 (TTFRTTGDWL…ISSIKALETQ (65 aa)). At Y937 the chain carries Phosphotyrosine. The short motif at 981–983 (VPV) is the PDZ-binding element.

The protein belongs to the protein kinase superfamily. Tyr protein kinase family. Ephrin receptor subfamily. In terms of assembly, heterotetramer upon binding of the ligand. The heterotetramer is composed of an ephrin dimer and a receptor dimer. Oligomerization is probably required to induce biological responses. Forms a ternary EFNA5-EPHA3-ADAM10 complex mediating EFNA5 extracellular domain shedding by ADAM10 which regulates the EFNA5-EPHA3 complex internalization and function. Interacts with NCK1 (via SH2 domain); mediates EFNA5-EPHA3 signaling. Interacts (phosphorylated) with PTPN1; dephosphorylates EPHA3 and may regulate its trafficking and function. Interacts (phosphorylated) with CRK; mediates EFNA5-EPHA3 signaling through RHOA GTPase activation. Autophosphorylates upon activation by EFNA5. Phosphorylation on Tyr-602 mediates interaction with NCK1. Dephosphorylated by PTPN1. In terms of tissue distribution, widely expressed. Highest level in placenta.

It localises to the cell membrane. The protein localises to the secreted. It carries out the reaction L-tyrosyl-[protein] + ATP = O-phospho-L-tyrosyl-[protein] + ADP + H(+). Its function is as follows. Receptor tyrosine kinase which binds promiscuously membrane-bound ephrin family ligands residing on adjacent cells, leading to contact-dependent bidirectional signaling into neighboring cells. The signaling pathway downstream of the receptor is referred to as forward signaling while the signaling pathway downstream of the ephrin ligand is referred to as reverse signaling. Highly promiscuous for ephrin-A ligands it binds preferentially EFNA5. Upon activation by EFNA5 regulates cell-cell adhesion, cytoskeletal organization and cell migration. Plays a role in cardiac cells migration and differentiation and regulates the formation of the atrioventricular canal and septum during development probably through activation by EFNA1. Involved in the retinotectal mapping of neurons. May also control the segregation but not the guidance of motor and sensory axons during neuromuscular circuit development. The chain is Ephrin type-A receptor 3 (EPHA3) from Homo sapiens (Human).